We begin with the raw amino-acid sequence, 265 residues long: Anamorsin homolog 1 (265 aa).

Residues 1–143 (MAATAAAALA…KASWSMGSSF (143 aa)) form an N-terminal SAM-like domain region. Positions 144 to 175 (PLKKATKGLPKIQIDDDSELIDEDSLLTEDDL) are linker. The [2Fe-2S] cluster site is built by Cys186, Cys195, Cys198, and Cys200. The fe-S binding site A stretch occupies residues 186-200 (CEVGATRKACKNCTC). Positions 226, 229, 237, and 240 each coordinate [4Fe-4S] cluster. Short sequence motifs (cx2C motif) lie at residues 226–229 (CGNC) and 237–240 (CGTC). A fe-S binding site B region spans residues 226–240 (CGNCGLGDAFRCGTC).

Belongs to the anamorsin family. In terms of assembly, monomer. [2Fe-2S] cluster is required as a cofactor. Requires [4Fe-4S] cluster as cofactor.

Its subcellular location is the cytoplasm. It is found in the mitochondrion intermembrane space. Its function is as follows. Component of the cytosolic iron-sulfur (Fe-S) protein assembly (CIA) machinery. Required for the maturation of extramitochondrial Fe-S proteins. Part of an electron transfer chain functioning in an early step of cytosolic Fe-S biogenesis, facilitating the de novo assembly of a [4Fe-4S] cluster on the cytosolic Fe-S scaffold complex. Electrons are transferred from NADPH via a FAD- and FMN-containing diflavin oxidoreductase. Together with the diflavin oxidoreductase, also required for the assembly of the diferric tyrosyl radical cofactor of ribonucleotide reductase (RNR), probably by providing electrons for reduction during radical cofactor maturation in the catalytic small subunit. The sequence is that of Anamorsin homolog 1 from Oryza sativa subsp. indica (Rice).